The chain runs to 169 residues: MLRSEKPVAVEDIVNIYKESPSIIITHYHGLTVSQVSSLRESLKSKEAGFKVVKNTLAKIAANQTGLDSIANLFAGPTAIVYSKEPVEMAKLVVNFAKANDNLKIIGGIVDNHVLDEHSIKELSKLPALNELRGKIVGLLQAPATKVVGVLQAPSSSMARVIQAHASKN.

It belongs to the universal ribosomal protein uL10 family. In terms of assembly, part of the ribosomal stalk of the 50S ribosomal subunit. The N-terminus interacts with L11 and the large rRNA to form the base of the stalk. The C-terminus forms an elongated spine to which L12 dimers bind in a sequential fashion forming a multimeric L10(L12)X complex.

In terms of biological role, forms part of the ribosomal stalk, playing a central role in the interaction of the ribosome with GTP-bound translation factors. This is Large ribosomal subunit protein uL10 from Rickettsia massiliae (strain Mtu5).